A 122-amino-acid chain; its full sequence is Large ribosomal subunit protein uL14c (122 aa).

It belongs to the universal ribosomal protein uL14 family. Part of the 50S ribosomal subunit.

The protein resides in the plastid. Its subcellular location is the chloroplast. Functionally, binds to 23S rRNA. The protein is Large ribosomal subunit protein uL14c of Cucumis sativus (Cucumber).